The following is a 325-amino-acid chain: Tartrate-resistant acid phosphatase type 5 (325 aa).

Positions 1–21 (MDTWTLLLVLHTSLLLPWAEG) are cleaved as a signal peptide. 2 N-linked (GlcNAc...) asparagine glycosylation sites follow: Asn-116 and Asn-147.

In terms of assembly, exists either as monomer or, after proteolytic processing, as a dimer of two chains linked by disulfide bond(s). It depends on Fe cation as a cofactor.

The protein localises to the lysosome. It carries out the reaction a phosphate monoester + H2O = an alcohol + phosphate. The chain is Tartrate-resistant acid phosphatase type 5 (ACP5) from Oryctolagus cuniculus (Rabbit).